The sequence spans 334 residues: Nucleoid-associated protein PMI0825 (334 aa).

The protein belongs to the YejK family.

The protein localises to the cytoplasm. The protein resides in the nucleoid. This Proteus mirabilis (strain HI4320) protein is Nucleoid-associated protein PMI0825.